The primary structure comprises 575 residues: NEDD4-binding protein 2-like 2 (575 aa).

Basic and acidic residues-rich tracts occupy residues 69–87 (QEDKTSTDVLKPLHKEMPG), 129–142 (PPEKKKCRERKSET), and 149–167 (DSKRRQEEKQKSNSKKLEM). Disordered regions lie at residues 69–169 (QEDK…EMDT) and 555–575 (GEQRWGGSLGSHSQVSIADDY). Positions 162–194 (SKKLEMDTELSQFYKEIEELENENEASQGSCTE) form a coiled coil. The segment covering 564–575 (GSHSQVSIADDY) has biased composition (polar residues).

The chain is NEDD4-binding protein 2-like 2 (N4bp2l2) from Mus musculus (Mouse).